A 235-amino-acid chain; its full sequence is Large ribosomal subunit protein uL1 (235 aa).

Belongs to the universal ribosomal protein uL1 family. In terms of assembly, part of the 50S ribosomal subunit.

Its function is as follows. Binds directly to 23S rRNA. The L1 stalk is quite mobile in the ribosome, and is involved in E site tRNA release. Functionally, protein L1 is also a translational repressor protein, it controls the translation of the L11 operon by binding to its mRNA. The polypeptide is Large ribosomal subunit protein uL1 (Mycobacterium sp. (strain JLS)).